The chain runs to 533 residues: MALSTNSTTSSLLPKTPLVQQPLLKNASLPTTTKAIRFIQPISAIHSSDSSKNTPIVSAKPSSPPAATSTAAATAVTKQEWSIDSWKTKKALQLPEYPNQEELKNVLKTIEDFPPIVFAGEARHLEEKLGEAAMGRAFLLQGGDCAESFKEFNANNIRDTFRILLQMGAVLMFGGQMPVIKVGRMAGQFAKPRSDNFEEKNGVKLPSYRGDNVNGDAFDLKSRTPDPQRLIRAYCQSAATLNLLRAFATGGYAAMQRVTQWNLDFTEHSEQGDRYRELANRVDEALGFMNAAGLTTDHPIMTTTEFWTSHECLLLPYEQSLTRLDSTSGLYYDCSAHFLWVGERTRQLDGAHVEFLRGIANPLGIKVSDKMDPSALVKLIEILNPQNKAGRITIITRMGAENMRVKLPHLIRAVRGAGQIVTWVSDPMHGNTIKAPCGLKTRPFDSIRAEVRAFFDVHEQEGSHPGGVHLEMTGQNVTECIGGSRTVTFDDLSSRYHTHCDPRLNASQSLELAFIIAERLRKRRLGSQSVLGQ.

The N-terminal 57 residues, 1–57 (MALSTNSTTSSLLPKTPLVQQPLLKNASLPTTTKAIRFIQPISAIHSSDSSKNTPIV), are a transit peptide targeting the chloroplast. Polar residues predominate over residues 47 to 56 (SSDSSKNTPI). The interval 47–70 (SSDSSKNTPIVSAKPSSPPAATST) is disordered. Positions 57–70 (VSAKPSSPPAATST) are enriched in low complexity. Cys145 lines the Mn(2+) pocket. Substrate-binding positions include Arg184, 343–344 (ER), Lys366, and Arg397. 3 residues coordinate Mn(2+): His429, Glu471, and Asp501.

This sequence belongs to the class-II DAHP synthase family. As to quaternary structure, homodimer. The cofactor is Mn(2+). As to expression, mostly expressed in flowers, especially in petal limbs and tubes, and, to a lower extent, in roots, stems, stigmas, anthers, leaves and sepals.

Its subcellular location is the plastid. The protein localises to the chloroplast. The catalysed reaction is D-erythrose 4-phosphate + phosphoenolpyruvate + H2O = 7-phospho-2-dehydro-3-deoxy-D-arabino-heptonate + phosphate. The protein operates within metabolic intermediate biosynthesis; chorismate biosynthesis; chorismate from D-erythrose 4-phosphate and phosphoenolpyruvate: step 1/7. Its function is as follows. Involved in the production of volatile organic compounds (VOCs), including floral volatile benzenoids and phenylpropanoids (FVBP), in flowers of fragrant cultivars (e.g. cv. Mitchell and cv. V26), scent attracting pollinators (e.g. the night-active hawkmoth pollinator Manduca sexta). Catalyzes an aldol-like condensation reaction between phosphoenolpyruvate (PEP) and D-erythrose 4-phosphate (E4P) to generate 3-deoxy-D-arabino-heptulosonate 7-phosphate (DAH7P) and inorganic phosphate. In Petunia hybrida (Petunia), this protein is Phospho-2-dehydro-3-deoxyheptonate aldolase 1, chloroplastic.